The chain runs to 180 residues: Large ribosomal subunit protein uL5 (180 aa).

It belongs to the universal ribosomal protein uL5 family. As to quaternary structure, part of the 50S ribosomal subunit; part of the 5S rRNA/L5/L18/L25 subcomplex. Contacts the 5S rRNA and the P site tRNA. Forms a bridge to the 30S subunit in the 70S ribosome.

In terms of biological role, this is one of the proteins that bind and probably mediate the attachment of the 5S RNA into the large ribosomal subunit, where it forms part of the central protuberance. In the 70S ribosome it contacts protein S13 of the 30S subunit (bridge B1b), connecting the 2 subunits; this bridge is implicated in subunit movement. Contacts the P site tRNA; the 5S rRNA and some of its associated proteins might help stabilize positioning of ribosome-bound tRNAs. The polypeptide is Large ribosomal subunit protein uL5 (Limosilactobacillus reuteri (strain DSM 20016) (Lactobacillus reuteri)).